The chain runs to 161 residues: MSIVTKSIVNADAEARYLSPGELDRIKSFVSGGERRLRIAQILTENRERLVKQAGEQVFQKRPDVVSPGGNAYGQELTATCLRDLDYYLRLVTYGIVSGDVTPIEEIGVIGAREMYKSLGTPIEGITEGIRALKSGASSLLSGEDAAEAGSYFDYVVGALS.

Position 71 is an N4-methylasparagine (N71). C81 serves as a coordination point for (2R,3E)-phycocyanobilin.

It belongs to the phycobiliprotein family. Component of the phycobilisome. Heterodimer of an alpha and a beta chain. Post-translationally, contains one covalently linked bilin chromophore.

It localises to the cellular thylakoid membrane. Its function is as follows. Light-harvesting photosynthetic bile pigment-protein from the phycobiliprotein complex. Allophycocyanin has a maximum absorption at approximately 650 nanometers. This chain is Allophycocyanin alpha chain 1, found in Microchaete diplosiphon (Fremyella diplosiphon).